The primary structure comprises 360 residues: Malate dehydrogenase (360 aa).

It belongs to the LDH2/MDH2 oxidoreductase family. Homodimer.

The protein localises to the cytoplasm. It carries out the reaction (S)-malate + NAD(+) = oxaloacetate + NADH + H(+). The polypeptide is Malate dehydrogenase (mdh) (Pyrococcus horikoshii (strain ATCC 700860 / DSM 12428 / JCM 9974 / NBRC 100139 / OT-3)).